A 942-amino-acid polypeptide reads, in one-letter code: MORC family CW-type zinc finger protein 3 (942 aa).

Residues Lys191, Lys205, Lys280, and Lys293 each participate in a glycyl lysine isopeptide (Lys-Gly) (interchain with G-Cter in SUMO2) cross-link. Residues 326-353 (AYEKVGCQLKANNMGVGVVGIIECNFLK) are nuclear matrix binding. The CW-type zinc finger occupies 404 to 454 (KRPDQTWVQCDACLKWRKLPDGIDQLPEKWYCSNNPDPQFRNCEVPEEPED). Positions 413, 416, 435, and 446 each coordinate Zn(2+). The RNA binding stretch occupies residues 503–594 (SFSPVKESVP…ENSTPKPAVD (92 aa)). Phosphoserine occurs at positions 517 and 543. Lys558 is covalently cross-linked (Glycyl lysine isopeptide (Lys-Gly) (interchain with G-Cter in SUMO2)). Residue Ser563 is modified to Phosphoserine. Lys604 participates in a covalent cross-link: Glycyl lysine isopeptide (Lys-Gly) (interchain with G-Cter in SUMO1); alternate. A Glycyl lysine isopeptide (Lys-Gly) (interchain with G-Cter in SUMO2); alternate cross-link involves residue Lys604. The segment at 623 to 654 (PKPCVQASSTSTSTSRSDPGITVSTQTDAPGL) is disordered. Positions 630-639 (SSTSTSTSRS) are enriched in low complexity. Glycyl lysine isopeptide (Lys-Gly) (interchain with G-Cter in SUMO1); alternate cross-links involve residues Lys657, Lys658, and Lys743. Glycyl lysine isopeptide (Lys-Gly) (interchain with G-Cter in SUMO2); alternate cross-links involve residues Lys657, Lys658, and Lys743. Positions 696 to 874 (SHQLQELRSE…KSTGQQAAAD (179 aa)) form a coiled coil. A Phosphoserine modification is found at Ser768. Lys797 participates in a covalent cross-link: Glycyl lysine isopeptide (Lys-Gly) (interchain with G-Cter in SUMO1); alternate. A Glycyl lysine isopeptide (Lys-Gly) (interchain with G-Cter in SUMO2); alternate cross-link involves residue Lys797.

In terms of assembly, homodimer. The sumoylated form interacts with PML (via SUMO-interacting motif). Interacts with TP53. Sumoylation is involved in interaction with PML and localization to PML nuclear bodies.

It localises to the nucleus. It is found in the nucleoplasm. The protein localises to the nucleus matrix. Its subcellular location is the PML body. The protein resides in the chromosome. With respect to regulation, dimerization of the ATPase domain is strictly required for the catalytic activity and binding to double-stranded DNA. Disrupting the interface between ATPase and the CW domains releases autoinhibition since the CW domain sterically impedes binding of the ATPase domain to DNA. Nuclear matrix protein which forms MORC3-NBs (nuclear bodies) via an ATP-dependent mechanism and plays a role in innate immunity by restricting different viruses through modulation of the IFN response. Mechanistically, possesses a primary antiviral function through a MORC3-regulated element that activates IFNB1, and this function is guarded by a secondary IFN-repressing function. Sumoylated MORC3-NBs associates with PML-NBs and recruits TP53 and SP100, thus regulating TP53 activity. Binds RNA in vitro. Histone methylation reader which binds to non-methylated (H3K4me0), monomethylated (H3K4me1), dimethylated (H3K4me2) and trimethylated (H3K4me3) 'Lys-4' on histone H3. The order of binding preference is H3K4me3 &gt; H3K4me2 &gt; H3K4me1 &gt; H3K4me0. This Mus musculus (Mouse) protein is MORC family CW-type zinc finger protein 3.